We begin with the raw amino-acid sequence, 601 residues long: Glutamine--tRNA ligase (601 aa).

The 'HIGH' region signature appears at proline 76 to histidine 86. ATP is bound by residues glutamate 77–asparagine 79 and histidine 83–serine 89. 2 residues coordinate L-glutamine: aspartate 109 and tyrosine 253. Residues threonine 272, arginine 301–leucine 302, and methionine 309–lysine 311 contribute to the ATP site. A 'KMSKS' region motif is present at residues valine 308–arginine 312.

Belongs to the class-I aminoacyl-tRNA synthetase family. As to quaternary structure, monomer.

It is found in the cytoplasm. It carries out the reaction tRNA(Gln) + L-glutamine + ATP = L-glutaminyl-tRNA(Gln) + AMP + diphosphate. The sequence is that of Glutamine--tRNA ligase from Rhodopirellula baltica (strain DSM 10527 / NCIMB 13988 / SH1).